A 195-amino-acid chain; its full sequence is 3-isopropylmalate dehydratase small subunit (195 aa).

It belongs to the LeuD family. LeuD type 1 subfamily. Heterodimer of LeuC and LeuD.

The enzyme catalyses (2R,3S)-3-isopropylmalate = (2S)-2-isopropylmalate. It functions in the pathway amino-acid biosynthesis; L-leucine biosynthesis; L-leucine from 3-methyl-2-oxobutanoate: step 2/4. Its function is as follows. Catalyzes the isomerization between 2-isopropylmalate and 3-isopropylmalate, via the formation of 2-isopropylmaleate. This is 3-isopropylmalate dehydratase small subunit from Salinispora tropica (strain ATCC BAA-916 / DSM 44818 / JCM 13857 / NBRC 105044 / CNB-440).